The following is a 539-amino-acid chain: Interleukin-2 receptor subunit beta (539 aa).

Positions 1 to 26 (MATIALPWSLSLYVFLLLLATPWASA) are cleaved as a signal peptide. Over 27 to 240 (AVKNCSHLEC…RTRPADPMKE (214 aa)) the chain is Extracellular. N-linked (GlcNAc...) asparagine glycans are attached at residues N30, N43, N55, and N71. Cysteines 36 and 46 form a disulfide. Residues C74 and C86 are joined by a disulfide bond. One can recognise a Fibronectin type-III domain in the interval 135-235 (APHSLQVLHI…QPLTFRTRPA (101 aa)). 2 N-linked (GlcNAc...) asparagine glycosylation sites follow: N150 and N216. Positions 221 to 225 (WSPWS) match the WSXWS motif motif. A helical transmembrane segment spans residues 241-268 (ILPMSWLRYLLLVLGCFSGFFSCVYILV). Topologically, residues 269 to 539 (KCRYLGPWLK…LQAQDSVHLI (271 aa)) are cytoplasmic. Residues 281-289 (LKCHIPDPS) carry the Box 1 motif motif. 3 disordered regions span residues 395–419 (VEED…GEQD), 440–465 (PNTA…LPSL), and 477–516 (LERM…QGPI).

This sequence belongs to the type I cytokine receptor family. Type 4 subfamily. Non-covalent dimer of an alpha and a beta subunit. IL2R exists in 3 different forms: a high affinity dimer, an intermediate affinity monomer (beta subunit), and a low affinity monomer (alpha subunit). The high and intermediate affinity forms also associate with a gamma subunit. Interacts with SHB upon interleukin stimulation.

It is found in the cell membrane. The protein resides in the cell surface. Its function is as follows. Receptor for interleukin-2. This beta subunit is involved in receptor mediated endocytosis and transduces the mitogenic signals of IL2. Probably in association with IL15RA, involved in the stimulation of neutrophil phagocytosis by IL15. This chain is Interleukin-2 receptor subunit beta (Il2rb), found in Mus musculus (Mouse).